Here is a 546-residue protein sequence, read N- to C-terminus: Chaperonin GroEL 1 (546 aa).

ATP is bound by residues Thr30–Pro33, Lys51, Asp87–Thr91, Gly415, Asn479–Ala481, and Asp495. Residues Lys526–Met546 form a disordered region. The segment covering Gly534 to Met546 has biased composition (gly residues).

It belongs to the chaperonin (HSP60) family. Forms a cylinder of 14 subunits composed of two heptameric rings stacked back-to-back. Interacts with the co-chaperonin GroES.

It localises to the cytoplasm. The catalysed reaction is ATP + H2O + a folded polypeptide = ADP + phosphate + an unfolded polypeptide.. In terms of biological role, together with its co-chaperonin GroES, plays an essential role in assisting protein folding. The GroEL-GroES system forms a nano-cage that allows encapsulation of the non-native substrate proteins and provides a physical environment optimized to promote and accelerate protein folding. This chain is Chaperonin GroEL 1, found in Burkholderia pseudomallei (strain K96243).